Reading from the N-terminus, the 910-residue chain is Seizure 6-like protein 2 (910 aa).

The N-terminal stretch at 1-27 is a signal peptide; sequence MGTPKAQHPPPSQLLLLILLSCAWIEG. Topologically, residues 28–844 are extracellular; that stretch reads LPLKEDEMMP…DPSRQLEGGN (817 aa). Residues 70-152 are disordered; that stretch reads PGSDPDPTLA…PLRPEGGEEE (83 aa). Pro residues predominate over residues 123-145; sequence LTPPPGTTAPPPPGPASPVPPLR. C173 and C202 are joined by a disulfide. Positions 173–286 constitute a CUB 1 domain; sequence CNNNISEGEG…NGFRIHYQAY (114 aa). N222 carries an N-linked (GlcNAc...) asparagine glycan. Residues 288 to 347 form the Sushi 1 domain; it reads LSCGFPPRPAHGDVSVTDLHPGGTATFHCDSGYQLQGEETLICLNGTRPAWTGEPPSCTA. Intrachain disulfides connect C290/C330, C316/C345, C349/C376, C464/C508, C491/C523, C527/C553, C644/C686, C672/C699, C705/C747, C733/C764, C771/C813, and C799/C828. N332, N373, N473, and N517 each carry an N-linked (GlcNAc...) asparagine glycan. In terms of domain architecture, CUB 2 spans 349 to 459; it reads CGGTIHNATL…LLLSLRFEAF (111 aa). One can recognise a Sushi 2 domain in the interval 462 to 525; the sequence is DRCFPPFLAH…WNDTEPACKA (64 aa). The region spanning 527–638 is the CUB 3 domain; it reads CGGELSEPAG…QGFVLHFKEV (112 aa). 3 Sushi domains span residues 642-701, 703-766, and 769-830; these read DTCP…ACQK, MTCA…KCAL, and EPCL…LCKV. The chain crosses the membrane as a helical span at residues 845-865; it reads LALAILLPLGLVIVLGIGVYI. Over 866-910 the chain is Cytoplasmic; that stretch reads YYTKLQGKSLFGFSGSHSYSPITVESDFSNPLYEAGDTREYEVSI.

This sequence belongs to the SEZ6 family. Expressed exclusively in the brain, predominantly in the neurons. Wide expression in the gray matter of the brain with high levels in the olfactory bulb, anterior olfactory nuclei, hippocampal formation and cerebellar cortex. Detected diffusely and weakly in the white matter, such as the corpus callosum and cerebellar medulla. In the cerebellar cortex, intensely expressed in Purkinje cells (PC) and granule cells. Detected also in interneurons in the molecular layer. Up-regulated at two weeks after birth.

It is found in the cell membrane. The protein localises to the endoplasmic reticulum membrane. Its function is as follows. May contribute to specialized endoplasmic reticulum functions in neurons. This Mus musculus (Mouse) protein is Seizure 6-like protein 2 (Sez6l2).